Consider the following 267-residue polypeptide: Thymidylate synthase (267 aa).

R24 provides a ligand contact to dUMP. Residue H54 coordinates (6R)-5,10-methylene-5,6,7,8-tetrahydrofolate. 129-130 (RR) contacts dUMP. The active-site Nucleophile is the C149. Residues 169–172 (RSAD), N180, and 210–212 (HVY) each bind dUMP. D172 serves as a coordination point for (6R)-5,10-methylene-5,6,7,8-tetrahydrofolate. A266 is a binding site for (6R)-5,10-methylene-5,6,7,8-tetrahydrofolate.

The protein belongs to the thymidylate synthase family. Bacterial-type ThyA subfamily. As to quaternary structure, homodimer.

Its subcellular location is the cytoplasm. The enzyme catalyses dUMP + (6R)-5,10-methylene-5,6,7,8-tetrahydrofolate = 7,8-dihydrofolate + dTMP. Its pathway is pyrimidine metabolism; dTTP biosynthesis. In terms of biological role, catalyzes the reductive methylation of 2'-deoxyuridine-5'-monophosphate (dUMP) to 2'-deoxythymidine-5'-monophosphate (dTMP) while utilizing 5,10-methylenetetrahydrofolate (mTHF) as the methyl donor and reductant in the reaction, yielding dihydrofolate (DHF) as a by-product. This enzymatic reaction provides an intracellular de novo source of dTMP, an essential precursor for DNA biosynthesis. This chain is Thymidylate synthase, found in Paenarthrobacter aurescens (strain TC1).